Here is an 84-residue protein sequence, read N- to C-terminus: NAD(P)H-quinone oxidoreductase subunit O (84 aa).

The protein belongs to the complex I NdhO subunit family. NDH-1 can be composed of about 15 different subunits; different subcomplexes with different compositions have been identified which probably have different functions.

The protein localises to the cellular thylakoid membrane. The catalysed reaction is a plastoquinone + NADH + (n+1) H(+)(in) = a plastoquinol + NAD(+) + n H(+)(out). It carries out the reaction a plastoquinone + NADPH + (n+1) H(+)(in) = a plastoquinol + NADP(+) + n H(+)(out). In terms of biological role, NDH-1 shuttles electrons from an unknown electron donor, via FMN and iron-sulfur (Fe-S) centers, to quinones in the respiratory and/or the photosynthetic chain. The immediate electron acceptor for the enzyme in this species is believed to be plastoquinone. Couples the redox reaction to proton translocation, and thus conserves the redox energy in a proton gradient. Cyanobacterial NDH-1 also plays a role in inorganic carbon-concentration. The protein is NAD(P)H-quinone oxidoreductase subunit O of Synechococcus sp. (strain CC9902).